The chain runs to 454 residues: Oxygen-dependent coproporphyrinogen-III oxidase, mitochondrial (454 aa).

The N-terminal 110 residues, 1–110, are a transit peptide targeting the mitochondrion; the sequence is MALQLGRLSS…MLPKTSGTRA (110 aa). Residues 43 to 70 are disordered; it reads AAGRVCRPPGPAGTEQSRGLGHGSTSRG. Ser112 carries the post-translational modification Phosphoserine. An important for dimerization region spans residues 193 to 202; that stretch reads VLQDGCVFEK. Ser244 lines the coproporphyrinogen III pocket. Residue His258 is the Proton donor of the active site. 260–262 is a coproporphyrinogen III binding site; the sequence is NYR. The segment at 392–428 is important for dimerization; the sequence is YVEFNLLYDRGTKFGLFTPGSRIESILMSLPLTARWE. Lys404 bears the N6-acetyllysine; alternate mark. Lys404 carries the post-translational modification N6-succinyllysine; alternate. 411–413 lines the coproporphyrinogen III pocket; that stretch reads GSR.

The protein belongs to the aerobic coproporphyrinogen-III oxidase family. Homodimer.

It is found in the mitochondrion intermembrane space. It catalyses the reaction coproporphyrinogen III + O2 + 2 H(+) = protoporphyrinogen IX + 2 CO2 + 2 H2O. It functions in the pathway porphyrin-containing compound metabolism; protoporphyrin-IX biosynthesis; protoporphyrinogen-IX from coproporphyrinogen-III (O2 route): step 1/1. Functionally, catalyzes the aerobic oxidative decarboxylation of propionate groups of rings A and B of coproporphyrinogen-III to yield the vinyl groups in protoporphyrinogen-IX and participates to the sixth step in the heme biosynthetic pathway. In Homo sapiens (Human), this protein is Oxygen-dependent coproporphyrinogen-III oxidase, mitochondrial.